Reading from the N-terminus, the 632-residue chain is Signal-transduction and transcriptional-control protein (632 aa).

Residues 197–270 (TYQYLNKITD…GQSYEDEEIM (74 aa)) enclose the PAS domain. Residues 324-554 (IIGQSEAMKR…LENCIENIVN (231 aa)) form the Sigma-54 factor interaction domain. ATP is bound by residues 352-359 (GESGTGKE) and 416-425 (ANEGTLFLDE). The segment at residues 606–625 (ISKACRILGINRSTLYIKIK) is a DNA-binding region (H-T-H motif).

This chain is Signal-transduction and transcriptional-control protein (stc), found in Clostridium beijerinckii (Clostridium MP).